The following is a 215-amino-acid chain: Sodium channel regulatory subunit beta-2 (215 aa).

Positions 1-29 (MHRDAWLPRPAFSLTGLSLFFSLVPSGRS) are cleaved as a signal peptide. Over 30-157 (MEVTVPTTLS…LEVPPERDST (128 aa)) the chain is Extracellular. An Ig-like C2-type domain is found at 32–154 (VTVPTTLSVL…QVLLEVPPER (123 aa)). N-linked (GlcNAc...) asparagine glycosylation is found at Asn-42, Asn-66, and Asn-74. Intrachain disulfides connect Cys-50/Cys-127 and Cys-72/Cys-75. Residues 158–179 (VAVIVGASVGGFLAVVILVLMV) form a helical membrane-spanning segment. Topologically, residues 180 to 215 (VKCVRRKKEQKLSTDDLKTEEEGKTDGEGNAEDGAK) are cytoplasmic. Positions 187–215 (KEQKLSTDDLKTEEEGKTDGEGNAEDGAK) are disordered. Residues 189–215 (QKLSTDDLKTEEEGKTDGEGNAEDGAK) are compositionally biased toward basic and acidic residues. A Phosphoserine modification is found at Ser-192. A Phosphothreonine modification is found at Thr-204.

The protein belongs to the sodium channel auxiliary subunit SCN2B (TC 8.A.17) family. A voltage-gated sodium (Nav) channel consists of an ion-conducting pore-forming alpha subunit functional on its own that is regulated by one or more beta subunits. The beta subunit SCN2B is disulfide-linked to the pore-forming alpha subunit. Interacts with SCN1A; regulatory subunit of SCN1A/Nav1.1. Interacts with SCN2A; regulatory subunit of SCN2A/Nav1.2. Interacts with SCN3A; regulatory subunit of SCN3A/Nav1.3. Interacts with SCN5A; regulatory subunit of SCN5A/Nav1.5. Interacts with SCN8A; regulatory subunit of SCN8A/Nav1.6. Interacts with SCN9A; regulatory subunit of SCN9A/Nav1.7. Interacts with SCN10A; regulatory subunit of SCN10A/Nav1.8. Interacts with TNR; may play a crucial role in clustering and regulation of activity of SCN2B-containing Nav channels at nodes of Ranvier.

It localises to the cell membrane. Its subcellular location is the cell projection. The protein localises to the axon. Regulatory subunit of multiple voltage-gated sodium (Nav) channels directly mediating the depolarization of excitable membranes. Navs, also called VGSCs (voltage-gated sodium channels) or VDSCs (voltage-dependent sodium channels), operate by switching between closed and open conformations depending on the voltage difference across the membrane. In the open conformation they allow Na(+) ions to selectively pass through the pore, along their electrochemical gradient. The influx of Na+ ions provokes membrane depolarization, initiating the propagation of electrical signals throughout cells and tissues. The accessory beta subunits participate in localization and functional modulation of the Nav channels. Modulates the activity of SCN1A/Nav1.1, SCN2A/Nav1.2, SCN2A/Nav1.3, SCN5A/Nav1.5, SCN8A/Nav1.6, SCN9A/Nav1.7 and SCN10A/Nav1.8. This is Sodium channel regulatory subunit beta-2 from Rattus norvegicus (Rat).